Reading from the N-terminus, the 126-residue chain is Fatty acid-binding protein 2, liver (126 aa).

Residues 54–56 (TPN), 99–101 (HIQ), and arginine 121 contribute to the cholate site.

Belongs to the calycin superfamily. Fatty-acid binding protein (FABP) family.

The protein resides in the cytoplasm. Its function is as follows. Binds free fatty acids and their coenzyme A derivatives, bilirubin, and some other small molecules in the cytoplasm. May be involved in intracellular lipid transport. The specificity of axolotl L-FABP differs from that of LB-FABP. Binds 2 ligands per protein molecule. The sequence is that of Fatty acid-binding protein 2, liver from Ambystoma mexicanum (Axolotl).